We begin with the raw amino-acid sequence, 318 residues long: tRNA-cytidine(32) 2-sulfurtransferase (318 aa).

Residues 52–57 carry the PP-loop motif motif; it reads SGGKDS. Residues Cys127, Cys130, and Cys218 each coordinate [4Fe-4S] cluster.

It belongs to the TtcA family. As to quaternary structure, homodimer. It depends on Mg(2+) as a cofactor. [4Fe-4S] cluster is required as a cofactor.

The protein localises to the cytoplasm. It carries out the reaction cytidine(32) in tRNA + S-sulfanyl-L-cysteinyl-[cysteine desulfurase] + AH2 + ATP = 2-thiocytidine(32) in tRNA + L-cysteinyl-[cysteine desulfurase] + A + AMP + diphosphate + H(+). It functions in the pathway tRNA modification. In terms of biological role, catalyzes the ATP-dependent 2-thiolation of cytidine in position 32 of tRNA, to form 2-thiocytidine (s(2)C32). The sulfur atoms are provided by the cysteine/cysteine desulfurase (IscS) system. This chain is tRNA-cytidine(32) 2-sulfurtransferase, found in Actinobacillus pleuropneumoniae serotype 3 (strain JL03).